The sequence spans 315 residues: Putative steroid dehydrogenase 2 (315 aa).

47-76 (ASWAVVTGATDGIGKSYSFELARRGFNVYI) is an NADP(+) binding site. Residue Tyr-202 is part of the active site.

This sequence belongs to the short-chain dehydrogenases/reductases (SDR) family. 17-beta-HSD 3 subfamily.

In Caenorhabditis elegans, this protein is Putative steroid dehydrogenase 2 (stdh-2).